We begin with the raw amino-acid sequence, 272 residues long: Ribosomal RNA small subunit methyltransferase J (272 aa).

S-adenosyl-L-methionine-binding positions include 120–121, 136–137, 171–172, and Asp188; these read RD, ER, and SS.

Belongs to the methyltransferase superfamily. RsmJ family.

The protein resides in the cytoplasm. The enzyme catalyses guanosine(1516) in 16S rRNA + S-adenosyl-L-methionine = N(2)-methylguanosine(1516) in 16S rRNA + S-adenosyl-L-homocysteine + H(+). In terms of biological role, specifically methylates the guanosine in position 1516 of 16S rRNA. In Colwellia psychrerythraea (strain 34H / ATCC BAA-681) (Vibrio psychroerythus), this protein is Ribosomal RNA small subunit methyltransferase J.